Consider the following 189-residue polypeptide: Small ribosomal subunit protein uS4 (189 aa).

One can recognise an S4 RNA-binding domain in the interval 107–181 (RRLQTQVFKL…VKRRTLRKGD (75 aa)). Positions 161-189 (QSPYGGGRPGRVKRRTLRKGDGAGGDDEE) are disordered.

The protein belongs to the universal ribosomal protein uS4 family. In terms of assembly, component of the small ribosomal subunit. Part of the small subunit (SSU) processome, composed of more than 70 proteins and the RNA chaperone small nucleolar RNA (snoRNA) U3.

Its subcellular location is the cytoplasm. The protein localises to the nucleus. It is found in the nucleolus. Functionally, component of the small ribosomal subunit. The ribosome is a large ribonucleoprotein complex responsible for the synthesis of proteins in the cell. Part of the small subunit (SSU) processome, first precursor of the small eukaryotic ribosomal subunit. During the assembly of the SSU processome in the nucleolus, many ribosome biogenesis factors, an RNA chaperone and ribosomal proteins associate with the nascent pre-rRNA and work in concert to generate RNA folding, modifications, rearrangements and cleavage as well as targeted degradation of pre-ribosomal RNA by the RNA exosome. The polypeptide is Small ribosomal subunit protein uS4 (rps-9) (Caenorhabditis elegans).